Consider the following 255-residue polypeptide: GTP cyclohydrolase FolE2 (255 aa).

Belongs to the GTP cyclohydrolase IV family.

The enzyme catalyses GTP + H2O = 7,8-dihydroneopterin 3'-triphosphate + formate + H(+). The protein operates within cofactor biosynthesis; 7,8-dihydroneopterin triphosphate biosynthesis; 7,8-dihydroneopterin triphosphate from GTP: step 1/1. Converts GTP to 7,8-dihydroneopterin triphosphate. This Syntrophus aciditrophicus (strain SB) protein is GTP cyclohydrolase FolE2.